The sequence spans 333 residues: Ornithine carbamoyltransferase (333 aa).

Residues Ser57 to Thr60, Arg108, and His135 to Gln138 contribute to the carbamoyl phosphate site. L-ornithine is bound by residues Asn168, Asp232, and Ser236 to Met237. Carbamoyl phosphate is bound by residues Cys274–Leu275 and Arg319.

The protein belongs to the aspartate/ornithine carbamoyltransferase superfamily. OTCase family.

Its subcellular location is the cytoplasm. It carries out the reaction carbamoyl phosphate + L-ornithine = L-citrulline + phosphate + H(+). It participates in amino-acid degradation; L-arginine degradation via ADI pathway; carbamoyl phosphate from L-arginine: step 2/2. Functionally, reversibly catalyzes the transfer of the carbamoyl group from carbamoyl phosphate (CP) to the N(epsilon) atom of ornithine (ORN) to produce L-citrulline. The chain is Ornithine carbamoyltransferase from Pediococcus pentosaceus (strain ATCC 25745 / CCUG 21536 / LMG 10740 / 183-1w).